The sequence spans 368 residues: tRNA-specific 2-thiouridylase MnmA (368 aa).

Residues 11–18 (GMSGGVDS) and Met37 contribute to the ATP site. Positions 97-99 (NPD) are interaction with target base in tRNA. Cys102 acts as the Nucleophile in catalysis. Cys102 and Cys199 are joined by a disulfide. Residue Gly127 participates in ATP binding. Residues 149–151 (KDQ) are interaction with tRNA. The Cysteine persulfide intermediate role is filled by Cys199. The tract at residues 311-312 (RY) is interaction with tRNA.

Belongs to the MnmA/TRMU family. As to quaternary structure, interacts with TusE.

It is found in the cytoplasm. The enzyme catalyses S-sulfanyl-L-cysteinyl-[protein] + uridine(34) in tRNA + AH2 + ATP = 2-thiouridine(34) in tRNA + L-cysteinyl-[protein] + A + AMP + diphosphate + H(+). Its function is as follows. Catalyzes the 2-thiolation of uridine at the wobble position (U34) of tRNA(Lys), tRNA(Glu) and tRNA(Gln), leading to the formation of s(2)U34, the first step of tRNA-mnm(5)s(2)U34 synthesis. Sulfur is provided by IscS, via a sulfur-relay system. Binds ATP and its substrate tRNAs. The chain is tRNA-specific 2-thiouridylase MnmA from Shigella dysenteriae serotype 1 (strain Sd197).